A 3646-amino-acid polypeptide reads, in one-letter code: MKDFLKKVLILFTVLLMSMPSSVLNLGTSVVRADDPLNIETRRIDEHTTITQNGCYRKIEKTDATDWTVPRKPIDLVILQDASGSFRTTIPSVKNALKRLTTYVSPEQYDENDPHLVKTDDPRTTDRVFVASYQGLDQVRYFENNDFSGNPANVYTDANSTGKNYTYGNSGLTSDQNKVHNFIDNIAVDGGTPTVPAIDDTIAQYNRVKGNMENGRKTVFLLVTDGVANGYRLPGTNTVVMDKSWTRTDAIQKAWRVDSYPEAAQDIIGRANELKAAGNQLKAAVGSEGSVVVGFWERVDNFTEKYYQYGPAYLNGFGNTINIGDNRSVQAIFHDALQSMASPDKVVNGKNVSFYVNEQNNIDVFSQKILESVAAALVKDDITGEFDITEGYKVDAIRINGKKIVPKVTDPSKEIRGTITQTGNKVKISVPDSVFNPGKNSFDYDLSKEARAPETDEDSEVDPPENYVPEKEEITVPELTGKFKAGDFETRQIGGRNQTVEVQKLEYCYPSATKTVKDADASNDIGVIPDPLELTKKPSYSAQLSKKDEEFTYTVDYNFNNVPYEFEKNVMLTDPIDYRLEVVSHSAQGPDGQSWPTRVVTQQDAGGNSQSVVVADVPPQGKDYNYLIMKKAKLKMTVRLKEEYRKNQASKAYLAILQNNNGYGLVNQGNIMWNGEDDSPNQDAHAKTKDKASTIRRSNPIYVKPPLDTEVDKKVNEKEHEGLQADGEEFEYKVTAPWPGIADKFTLTDTVVDELEIVPNSAKVTVAGKSYNALTKAISINGQTIDITLDKAQLTSLNRLISRRGGSEVQEIELIFKAKIRPGADLSKYKKNGAVNIPNTADVILNDKKKTSKEVTVTPPKPKEPTVSKKINNTLDSLVTFDGQPYTYNITTAVPSDVAGYKKFVISDKLDADLEFDGQASISGPLADVFEIQTNGQTVTATVKEGKFKELAKYSFVELTIPAKVKAGVTGKTIENKAKISFTNENNVAKEVESNPVTVTPPPVTKKINENLDHLDIATGQPYKYNVKTTLPSDITSYKEFVITDTLEDELSVINEGTDKPVISGPAAEFFDVTVSGQKVTATMKNFAGASALAGQEIELVIPAKINDGVTRSNIPNKATFSFKDKNDHKGEKETIPVTVTPPTEPNVSKKINGDQDNATIAAETDFTYNIKTTLPNDIDTYKSFAITDTLDENLGVVNPEPSISEEAKKFFDITVSGNTVTATMKDFAKASALANKEIELVIHAKVKKESVLPEIPNTAKITYTNKNNESKEKETEPVKVTPPPITKKVNGKDQEDLASLTSTFKYTVDSKVPIVADKFVLSDTLEEVLTFDGDATVTIDGQTVTDVTVAKKDQKLTVTFDKDQVKKYAGKAVQVAFDAKIKSGYTVDQLVAKYPNGDKAAIPNKASFVVNDNPETEKFSNPVTVTPPPPNTPEIEKKVNGADSYNLQTRLEEFTYSLNTAMPTNATEFTVTDELKSVLEFAGKKGDVQVKIDGKAANDQATISTDKNTLTVAFAEKAVKANAGKSIEVTFKAKIREGANLLDYLVPGQGIRIPNKASYDIDHNPKFHKDSNEVPVTPPSPEQPPIEKDVNDKAEATLEARDEEFTYHVKTKIPYEATAFNITDTLKEVLDFSGEKGQAEATVDGKKLSDDHIAINGQTITVTLNQEELKANADKEIKLTFKAKIRPNANLAAYVVGDKVVINNQASYNVDLPDNPGVHKDSNIVPVTPPSPEKPEIEKTVNDAKEATLANRDEIFTYKVKTKVPFDATAFSIDDTIKDVLEFADAGSATLNGEALEADRISIADQKITLTLTEDQVKNNGGKEVVLTFKAKIRQGANLSGYIEKGKTVINNQASYNAAFPNDPNFHKDSNIVPVTPPNPENPPIEKKVNEAESANLGARDEEFTYTIDTTVPLDVTGFAVYDTIEKVLEFSGENGQASATVDGQPLDASHITIKGQKITVKLTEDEAKALGGKAVHVSFKAKIKAGANLSDYIEKDGTTRIYNTAKYNFNNDPGTEQSSKPVPVIPPTPTEPELKKEVNGKEAETLANRDDVFTYTVKTTVPQDATAFSISDSLVPVLEFAGEDAEASLTLNGEKLDAKQIKLKDQTISAELTEAQVKANGGKEVVLNFKAKIREGANLADYIEADGVTRVPNKASYVANFPHRPKVEKDSNIVPVTPPSPENPPVEKKVNNKPSATLDSRDEEFTYTIDTKVPVDATGFKITDELKDVLEFSGKKGQAEVTVDGDKDVIEDSQITVDKQVLTVTLTKDQVKKYGNKAVHVSFKAKIRKNVSLAGYIEADGVTRIPNIAKYIINDDPKTEKSTEPVPVIPPSPEEPGIKKEVNGQPEATLKERYEEFTYKVTTSVPQDATAFSVSDTLVPVLEFSGEKGQATATLDGQEIDANRINVADQTISMALTEDEVKANGGKEVTLTFKAKIREGANLSAYIEKGKTSIPNTASYTAGFPNRPEIHKDSNRVPVTPPTPEEPEIKKDVNGKEEETLANRNDEFTYHINTKVPFDATAFSINDELKDVLEFADGTGRATASLNGQALDADRISINGQTITVNLTEEQVKNNGGKDVNLTFTAKIRQGVNLSGYIKDGKTSIPNKASYRVDFPNNPGVTKDSNEVPVTPPSPENPPIEKKVNEAESANLGARDEEFTYTIDTTVPLDVTGFAVYDTIEKVLEFSGENGQASATVDGQPLDASHITIKGQKITVKLTEDEAKALGGKAVHVSFKAKIKAGANLSDYIEKDGTTRIYNTAKYNFNNDPGTEQSSKPVPVIPPTPTEPELKKEVNGKEAETLANRDDVFTYTVKTTVPQDATAFSISDKLEDVLEFAGESSATLAGEDLKADQITTDGQIIKLTLTEDQVKANGGKEVVLNFKAKIREGANLSAYMKADKAEVPNKASYTVGFPNKPAVTKDSNEVPVTPPSPEQPPIEKDVNSKPSETIADRTEEFTYNIHTTMPQDATGFTVTDELKDVLEFAGDVQVTLGGKKADAAVAKNGQTLEVTFPEETVKANGGKKVQVTFKAKIKADADLTPYETANSYSVPNTASYLINNNPTSKKETKPVTVEVPKQPGPEVTKKINRTLDHLDVDRDVPYMYNVNTQIPKDIRLYKEFTVTDTLEPVLEITGTPVAYVDGYATDAVETKVEGNTVTVTVKDFARISGYKEIQLYIPAKLKADSDLSAYENQTVPNKATIAFKDSNGKNGTKESNPVTVRPRDPEKPEEPKPNEPAKTVGPADGSNPSTAYRLKELKEGFRFDVTAKVPTDPVDESGNPIKDAQGRDVKTELNSFTVTDELEKVLKVDRVAVKVEENKVAEAIAKITAKIEKAESDLKELEGKETNGTFAKKLAEAEKKVEELTAQLAAAKEKAAAAPATPAPASDSDAGNATATPAPADNNAEVAALEESLKAAQAELEQLKADGAKAGNLATPEEQKVEQDKLNKNLEQLKESKEKLEKALEAFTTVNDKGEITDEALAKIAKVTVEGQKVTVEVTDKAVLEALKGSTFRVIIYSSIKDGADLSSYLNKENNETKIPNKATVTFNDKPKVTNTVNVYPPEPTTPPQTPPHTPPTTPGTPPPTTPDTPPAPKGDLPPAPTPEPEKPKNILPKTGTSATMVNEVIIGMILVLMGLLLRRKPKH.

An N-terminal signal peptide occupies residues 1-33 (MKDFLKKVLILFTVLLMSMPSSVLNLGTSVVRA). Residues 34–359 (DDPLNIETRR…KNVSFYVNEQ (326 aa)) form a does not bind platelets region. The tract at residues 34–690 (DDPLNIETRR…NQDAHAKTKD (657 aa)) is F2, binds platelets, fibronectin, vitronectin, salivary pellicle, causes ADP secretion by dense granules. Residues 34–1328 (DDPLNIETRR…KFVLSDTLEE (1295 aa)) are binds platelets. The 299-residue stretch at 75 to 373 (DLVILQDASG…VFSQKILESV (299 aa)) folds into the VWFA domain. The Integrin-like recognition motif NGR signature appears at 214–216 (NGR). The short motif at 416 to 418 (RGT) is the Integrin-like recognition motif RGT element. A disordered region spans residues 439 to 466 (KNSFDYDLSKEARAPETDEDSEVDPPEN). A compositionally biased stretch (basic and acidic residues) spans 445–454 (DLSKEARAPE). The Integrin-like recognition motif AGD signature appears at 485 to 487 (AGD). The segment at 709-3205 (TEVDKKVNEK…TVPNKATIAF (2497 aa)) is central region with RrgB repeats. Composition is skewed to basic and acidic residues over residues 1124–1135 (KDKNDHKGEKET) and 1563–1573 (DHNPKFHKDSN). 12 disordered regions span residues 1124-1153 (KDKN…KKIN), 1563-1589 (DHNP…PIEK), 2011-2036 (FNND…EPEL), 2170-2198 (EKDS…KPSA), 2320-2343 (KTEK…IKKE), 2467-2492 (PNRP…PEIK), 2611-2644 (ASYR…PIEK), 2767-2792 (FNND…EPEL), 2916-2948 (PNKP…NSKP), 3202-3252 (TIAF…NPST), 3371-3412 (AAAK…AALE), and 3550-3618 (NDKP…PKTG). The segment covering 2011–2022 (FNNDPGTEQSSK) has biased composition (polar residues). Residues 2767–2778 (FNNDPGTEQSSK) are compositionally biased toward polar residues. Residues 3210 to 3220 (GKNGTKESNPV) show a composition bias toward polar residues. Over residues 3223–3237 (RPRDPEKPEEPKPNE) the composition is skewed to basic and acidic residues. Coiled coils occupy residues 3326–3376 (IAKI…AKEK) and 3408–3475 (VAAL…VNDK). Over residues 3371–3406 (AAAKEKAAAAPATPAPASDSDAGNATATPAPADNNA) the composition is skewed to low complexity. Polar residues predominate over residues 3550–3560 (NDKPKVTNTVN). Residues 3563–3605 (PPEPTTPPQTPPHTPPTTPGTPPPTTPDTPPAPKGDLPPAPTP) are compositionally biased toward pro residues. An LPXTG sorting signal motif is present at residues 3614-3618 (LPKTG). Thr-3617 carries the post-translational modification Pentaglycyl murein peptidoglycan amidated threonine. Positions 3618 to 3646 (GTSATMVNEVIIGMILVLMGLLLRRKPKH) are cleaved as a propeptide — removed by sortase.

It is found in the secreted. Its subcellular location is the cell wall. Its activity is regulated as follows. Whole bacterial adhesion to Chinese hamster ovary cells expressing GPIIbIIIa is abrogated by integrin inhibitor RGDS and GPIIbIIIa inhibitor Abciximab. Functionally, a cell wall protein involved with Hsa in host cell interactions required for colonization and pathogenesis. Involved in recognition of platelets. Interacts with human platelet integrin receptor GPIIbIIIa (a complex of ITGA2B and ITGB3). Involved in platelet spreading, presumably by activation of outside-in signaling leading to platelet activation and then spreading. Spreading also involves GPIIbIIIa. Binding to platelets under static conditions causes platelet dense granules to secrete ADP (similar to release induced by fibrinogen binding), has no effect on platelet alpha granule release. The N-terminal 656 aa residue fragment (called F2) also binds platelets, causes dense granule secretion and allows platelet spreading. Acts in concert with Hsa to promote binding to human fibronectin (FN1) and vitronectin (VTN), and biofilm formation. F2 bind activated platelets more strongly than unactivated platelets. Binding to both FN1 and VTN is mediated at least in part by their glycosylation. The chain is Platelet adherence protein A from Streptococcus gordonii (strain Challis / ATCC 35105 / BCRC 15272 / CH1 / DL1 / V288).